Consider the following 1199-residue polypeptide: AP-3 complex subunit delta-1 (1199 aa).

At alanine 2 the chain carries N-acetylalanine. HEAT repeat units lie at residues 34–71 (KYIS…LGYD), 142–179 (DLAR…KYPE), 180–216 (SLRP…RNPK), 218–254 (YLSL…LEPR), 257–296 (KKLI…GMPN), 298–336 (SASI…THPK), 337–373 (SVQS…KKNL), 375–409 (EIVK…QSNY), and 521–558 (VYVQ…ERLP). Disordered stretches follow at residues 623 to 695 (LDAW…RYQD) and 724 to 963 (YVKL…EPIP). Serine 632, serine 634, and serine 636 each carry phosphoserine. Basic and acidic residues-rich tracts occupy residues 639–651 (EKPK…EEPR) and 665–675 (LARRREARKQE). The stretch at 659–679 (EEDEEELARRREARKQEQANN) forms a coiled coil. The residue at position 688 (serine 688) is a Phosphoserine. Residues 722–750 (DQYVKLEEQRRHRQRLEKDKKRKKKEKGK) are a coiled coil. The segment covering 732–754 (RHRQRLEKDKKRKKKEKGKRRHS) has biased composition (basic residues). 2 positions are modified to phosphoserine: serine 754 and serine 755. Threonine 758 carries the phosphothreonine modification. Phosphoserine occurs at positions 760, 784, and 825. The span at 773-790 (ITEEMPENALPSDEDDKD) shows a compositional bias: acidic residues. A compositionally biased stretch (basic and acidic residues) spans 791–836 (PNDPYRALDIDLDKPLADSEKLPVQKHRNAEAVKSPEKEGVLGVEK). A compositionally biased stretch (basic residues) spans 837 to 846 (KSKKPKKKEK). A coiled-coil region spans residues 843-863 (KKEKKTKEREREKKDKKGEDL). The segment covering 847–862 (KTKEREREKKDKKGED) has biased composition (basic and acidic residues). Pro residues predominate over residues 870-880 (TPPPAAAPIPA). A compositionally biased stretch (basic and acidic residues) spans 894–916 (PKDECEVLKGEEEDHVDHDQERK). Residues 911–934 (HDQERKSSRHKKKKHRKEKEKEER) are a coiled coil. A compositionally biased stretch (basic residues) spans 917–928 (SSRHKKKKHRKE).

It belongs to the adaptor complexes large subunit family. Adaptor protein complex 3 (AP-3) is a heterotetramer composed of two large adaptins (delta-type subunit AP3D1 and beta-type subunit AP3B1 or AP3B2), a medium adaptin (mu-type subunit AP3M1 or AP3M2) and a small adaptin (sigma-type subunit APS1 or AP3S2). AP-3 associates with the BLOC-1 complex. Interacts with SLC30A2. Interacts with CLN3 (via dileucine motif); this interaction facilitates lysosomal targeting.

It is found in the cytoplasm. Its subcellular location is the golgi apparatus membrane. Functionally, part of the AP-3 complex, an adaptor-related complex which is not clathrin-associated. The complex is associated with the Golgi region as well as more peripheral structures. It facilitates the budding of vesicles from the Golgi membrane and may be directly involved in trafficking to lysosomes. Involved in process of CD8+ T-cell and NK cell degranulation. In concert with the BLOC-1 complex, AP-3 is required to target cargos into vesicles assembled at cell bodies for delivery into neurites and nerve terminals. The protein is AP-3 complex subunit delta-1 (Ap3d1) of Mus musculus (Mouse).